We begin with the raw amino-acid sequence, 472 residues long: Phosphoenolpyruvate carboxylase (472 aa).

The protein belongs to the PEPCase type 2 family. As to quaternary structure, homotetramer. Mg(2+) serves as cofactor.

The enzyme catalyses oxaloacetate + phosphate = phosphoenolpyruvate + hydrogencarbonate. In terms of biological role, catalyzes the irreversible beta-carboxylation of phosphoenolpyruvate (PEP) to form oxaloacetate (OAA), a four-carbon dicarboxylic acid source for the tricarboxylic acid cycle. The sequence is that of Phosphoenolpyruvate carboxylase from Pyrococcus furiosus (strain ATCC 43587 / DSM 3638 / JCM 8422 / Vc1).